Consider the following 49-residue polypeptide: Multidrug efflux pump accessory protein AcrZ (49 aa).

Residues methionine 1–serine 7 are Periplasmic-facing. A helical transmembrane segment spans residues leucine 8–glycine 28. Over leucine 29–histidine 49 the chain is Cytoplasmic.

The protein belongs to the AcrZ family. In terms of assembly, part of the AcrA-AcrB-AcrZ-TolC efflux pump, interacts directly with AcrB.

The protein resides in the cell inner membrane. Functionally, acrA-AcrB-AcrZ-TolC is a drug efflux protein complex with a broad substrate specificity. This protein binds to AcrB and is required for efflux of some but not all substrates, suggesting it may influence the specificity of drug export. The sequence is that of Multidrug efflux pump accessory protein AcrZ from Escherichia coli O157:H7.